The following is a 456-amino-acid chain: Exodeoxyribonuclease 7 large subunit (456 aa).

The protein belongs to the XseA family. Heterooligomer composed of large and small subunits.

The protein resides in the cytoplasm. The catalysed reaction is Exonucleolytic cleavage in either 5'- to 3'- or 3'- to 5'-direction to yield nucleoside 5'-phosphates.. Its function is as follows. Bidirectionally degrades single-stranded DNA into large acid-insoluble oligonucleotides, which are then degraded further into small acid-soluble oligonucleotides. In Escherichia coli (strain SE11), this protein is Exodeoxyribonuclease 7 large subunit.